The chain runs to 573 residues: Diflavin flavoprotein A 1 (573 aa).

A zinc metallo-hydrolase region spans residues 43 to 236; that stretch reads QNGTTYNSYL…GTISTVANGH (194 aa). H92, E94, D96, H159, D178, and H236 together coordinate Fe cation. The Flavodoxin-like domain occupies 265–401; sequence VVVFYVADYG…LCDESGTDLG (137 aa). The flavodoxin-reductase-like stretch occupies residues 424–573; that stretch reads IGRISGGLYI…VHHRKVGNYY (150 aa).

In the N-terminal section; belongs to the zinc metallo-hydrolase group 3 family. It in the C-terminal section; belongs to the flavodoxin reductase family. Homodimer. Fe cation serves as cofactor. Requires FAD as cofactor. FMN is required as a cofactor.

Its function is as follows. Mediates electron transfer from NADH to oxygen, reducing it to water. This modular protein has 3 redox cofactors, in other organisms the same activity requires 2 or 3 proteins. The protein is Diflavin flavoprotein A 1 (dfa1) of Synechocystis sp. (strain ATCC 27184 / PCC 6803 / Kazusa).